The chain runs to 664 residues: Transketolase 1 (664 aa).

His-26 provides a ligand contact to substrate. Residues His-66 and 114 to 116 contribute to the thiamine diphosphate site; that span reads GPL. Asp-155 contributes to the Mg(2+) binding site. The thiamine diphosphate site is built by Gly-156 and Asn-185. The Mg(2+) site is built by Asn-185 and Ile-187. 3 residues coordinate substrate: His-260, Arg-357, and Ser-384. A thiamine diphosphate-binding site is contributed by His-260. The active-site Proton donor is Glu-411. Phe-437 contacts thiamine diphosphate. His-461, Asp-469, and Arg-520 together coordinate substrate.

It belongs to the transketolase family. In terms of assembly, homodimer. It depends on Mg(2+) as a cofactor. The cofactor is Ca(2+). Mn(2+) is required as a cofactor. Co(2+) serves as cofactor. Requires thiamine diphosphate as cofactor.

It catalyses the reaction D-sedoheptulose 7-phosphate + D-glyceraldehyde 3-phosphate = aldehydo-D-ribose 5-phosphate + D-xylulose 5-phosphate. Functionally, catalyzes the transfer of a two-carbon ketol group from a ketose donor to an aldose acceptor, via a covalent intermediate with the cofactor thiamine pyrophosphate. The chain is Transketolase 1 (tkt1) from Vibrio vulnificus (strain YJ016).